We begin with the raw amino-acid sequence, 388 residues long: Succinate--CoA ligase [ADP-forming] subunit beta (388 aa).

Residues 9–245 enclose the ATP-grasp domain; that stretch reads KELLAGYGLP…KSQENERELK (237 aa). ATP contacts are provided by residues Lys-46, 53–55, Glu-100, Tyr-103, and Glu-108; that span reads GRG. The Mg(2+) site is built by Asn-200 and Asp-214. Residues Asn-265 and 322 to 324 each bind substrate; that span reads GIV.

Belongs to the succinate/malate CoA ligase beta subunit family. As to quaternary structure, heterotetramer of two alpha and two beta subunits. The cofactor is Mg(2+).

The enzyme catalyses succinate + ATP + CoA = succinyl-CoA + ADP + phosphate. It carries out the reaction GTP + succinate + CoA = succinyl-CoA + GDP + phosphate. It participates in carbohydrate metabolism; tricarboxylic acid cycle; succinate from succinyl-CoA (ligase route): step 1/1. Functionally, succinyl-CoA synthetase functions in the citric acid cycle (TCA), coupling the hydrolysis of succinyl-CoA to the synthesis of either ATP or GTP and thus represents the only step of substrate-level phosphorylation in the TCA. The beta subunit provides nucleotide specificity of the enzyme and binds the substrate succinate, while the binding sites for coenzyme A and phosphate are found in the alpha subunit. This is Succinate--CoA ligase [ADP-forming] subunit beta from Neisseria meningitidis serogroup C (strain 053442).